A 108-amino-acid polypeptide reads, in one-letter code: MSRVSEYGVPEGVRESDSDTDSVFMYQHTELMQNNASPLVVRARPPAVLIPLVDVPRPRSRRKASAQLKMQMDRLCNVLGVVLQMATLALVTYIAFVVHTRATSCKRE.

Topologically, residues 1-77 are intravirion; sequence MSRVSEYGVP…LKMQMDRLCN (77 aa). Residues 78 to 98 traverse the membrane as a helical; Signal-anchor for type II membrane protein segment; it reads VLGVVLQMATLALVTYIAFVV. Over 99–108 the chain is Virion surface; sequence HTRATSCKRE.

It belongs to the varicellovirus ORF1 protein family. Homodimer. Post-translationally, phosphorylated.

Its subcellular location is the virion membrane. The protein localises to the host Golgi apparatus membrane. This Homo sapiens (Human) protein is Structural protein 1.